A 431-amino-acid chain; its full sequence is Tol-Pal system protein TolB (431 aa).

The N-terminal stretch at 1–26 is a signal peptide; that stretch reads MSLMTKLGFRALVASCLITAGSAANA. Residues 406-431 form a disordered region; that stretch reads DGSAPPQILSVQGGSVREPSWGPFMQ.

The protein belongs to the TolB family. In terms of assembly, the Tol-Pal system is composed of five core proteins: the inner membrane proteins TolA, TolQ and TolR, the periplasmic protein TolB and the outer membrane protein Pal. They form a network linking the inner and outer membranes and the peptidoglycan layer.

It localises to the periplasm. Its function is as follows. Part of the Tol-Pal system, which plays a role in outer membrane invagination during cell division and is important for maintaining outer membrane integrity. The sequence is that of Tol-Pal system protein TolB from Burkholderia orbicola (strain MC0-3).